Here is a 1881-residue protein sequence, read N- to C-terminus: Ankyrin-1 (1881 aa).

Residues 1-827 are 89 kDa domain; that stretch reads MPYSVGFREA…EDEGEELISF (827 aa). ANK repeat units follow at residues 44–73, 77–106, 110–139, 143–172, 174–201, 205–234, 238–267, 271–300, 304–333, 337–366, 370–399, 403–432, 436–465, 469–498, 502–531, 535–564, 568–597, 601–630, 634–663, 667–696, 700–729, 733–762, and 766–795; these read NGLN…ILET, KGNT…NVNA, KGFT…NQNV, DGFT…KGKV, LPAL…NPDV, TGFT…SVNF, NGIT…QIET, DELT…PIQA, NGLS…EIDD, DHLT…KPNS, NGFT…SIDA, SGLT…SPNV, KVET…KVNA, DDQT…NPNL, AGHT…SQAC, KGFT…HPNA, NGLT…SPHS, NGYT…SANA, QGVT…NGNL, SGLT…MVDA, MGYT…DVNA, LGYS…SPNE, and DGTT…ETSF. A (3S)-3-hydroxyasparagine; by HIF1AN; partial modification is found at Asn-105. Asn-233 carries the (3S)-3-hydroxyasparagine; by HIF1AN; partial modification. Ser-429 is subject to Phosphoserine. A (3S)-3-hydroxyasparagine; by HIF1AN; partial mark is found at Asn-431 and Asn-464. (3S)-3-hydroxyasparagine; by HIF1AN; partial is present on residues Asn-629 and Asn-662. Asp-695 carries the post-translational modification (3S)-3-hydroxyaspartate; by HIF1AN; partial. Asn-728 is subject to (3S)-3-hydroxyasparagine; by HIF1AN; partial. Ser-759 carries the phosphoserine modification. Asn-761 is subject to (3S)-3-hydroxyasparagine; by HIF1AN; partial. Ser-781, Ser-817, Ser-834, and Ser-856 each carry phosphoserine. The disordered stretch occupies residues 875-904; the sequence is EEQEQASKEYDEDSLIPSSPATETSDNISP. A compositionally biased stretch (polar residues) spans 890 to 904; sequence IPSSPATETSDNISP. 2 ZU5 domains span residues 913–1068 and 1070–1216; these read FLVS…IMSR and CQDY…LSDC. Phosphothreonine is present on Thr-961. The residue at position 1073 (Tyr-1073) is a Phosphotyrosine. Ser-1082 carries the phosphoserine modification. A UPA domain region spans residues 1234–1362; it reads TAVPYMAKFV…QHILCHLNIT (129 aa). 2 positions are modified to phosphothreonine: Thr-1378 and Thr-1380. The 55 kDa regulatory domain stretch occupies residues 1383–1881; the sequence is ALRYSILSES…SKDHTSTPNP (499 aa). Phosphoserine occurs at positions 1390, 1392, and 1396. Thr-1400 carries the phosphothreonine modification. A Death domain is found at 1403–1487; that stretch reads AEMKMAVISE…EIVNMLEGSG (85 aa). Ser-1428 and Ser-1486 each carry phosphoserine. Residues 1486–1510 are disordered; that stretch reads SGRQSRNLKPDRRHTDRDYSLSPSQ. Basic and acidic residues predominate over residues 1493 to 1504; that stretch reads LKPDRRHTDRDY. A phosphoserine mark is found at Ser-1523 and Ser-1533. Residues 1583 to 1613 form a disordered region; the sequence is SSLECSKAEDSDATGHEWKLEGALSEEPRGP. The span at 1588-1612 shows a compositional bias: basic and acidic residues; sequence SKAEDSDATGHEWKLEGALSEEPRG. Ser-1617 bears the Phosphoserine mark. Disordered regions lie at residues 1637-1703, 1718-1791, and 1840-1859; these read LLEQ…LQDW, QGSW…EAKN, and ADAA…EDPS. The segment covering 1642 to 1658 has biased composition (basic and acidic residues); the sequence is EGQRSEEKLPGSKRQDD. 5 positions are modified to phosphoserine: Ser-1666, Ser-1671, Ser-1686, Ser-1690, and Ser-1696. Residues 1683–1694 show a composition bias toward polar residues; sequence ITHSPTVSQVTE. Polar residues-rich tracts occupy residues 1718–1739 and 1758–1771; these read QGSW…STMT and SEHT…AESS. The segment covering 1772–1781 has biased composition (basic and acidic residues); it reads QADRDRRQQG.

Component of the ankyrin-1 complex in the erythrocyte, composed of ANK1, RHCE, RHAG, SLC4A1, EPB42, GYPA, GYPB and AQP1. Interacts with a number of integral membrane proteins and cytoskeletal proteins. Interacts (via N-terminus) with SPTB/spectrin (beta chain). Also interacts with TTN/titin. Isoform Mu17 interacts with OBSCN isoform 3/obscurin. Interacts with HIF1AN. Interacts (via ANK 1-5 repeats) with RHCE; this interaction mediates the primary membrane attachment site for ANK1. Interacts (via ANK 1-2 repeats) with AQP1 (via the N-terminal). Interacts (via ANK 1-13 repeats) with EPB42. Interacts directly with SLC4A1 (via the cytoplasmic domain); this interaction is mediated by the SLC4A1 Band 3-II and Band 3-III dimers. Regulated by phosphorylation. Post-translationally, palmitoylated. In terms of processing, hydroxylated by HIF1AN at several asparagine and 1 aspartate residue within ANK repeat region. Hydroxylation seems to increase the conformational stability of this region and may also modulate protein-protein interactions mediated by the ANK repeat region. (Microbial infection) Probably cleaved by P.falciparum SERA6; the cleavage probably causes the disruption of the actin cytoskeleton and the rupture of the erythrocyte cell membrane releasing the merozoites. As to expression, isoform Mu17, isoform Mu18, isoform Mu19 and isoform Mu20 are expressed in skeletal muscle. Isoform Br21 is expressed in brain.

The protein localises to the cytoplasm. It is found in the cytoskeleton. The protein resides in the membrane. Its subcellular location is the myofibril. It localises to the sarcomere. The protein localises to the m line. It is found in the sarcoplasmic reticulum. Functionally, component of the ankyrin-1 complex, a multiprotein complex involved in the stability and shape of the erythrocyte membrane. Attaches integral membrane proteins to cytoskeletal elements; binds to the erythrocyte membrane protein band 4.2, to Na-K ATPase, to the lymphocyte membrane protein GP85, and to the cytoskeletal proteins fodrin, tubulin, vimentin and desmin. Erythrocyte ankyrins also link spectrin (beta chain) to the cytoplasmic domain of the erythrocytes anion exchange protein; they retain most or all of these binding functions. Together with obscurin in skeletal muscle may provide a molecular link between the sarcoplasmic reticulum and myofibrils. The protein is Ankyrin-1 of Homo sapiens (Human).